The primary structure comprises 321 residues: GDP-L-fucose synthase (321 aa).

14 to 20 (GGSGLVG) is an NADP(+) binding site. Y143 (proton donor/acceptor) is an active-site residue. NADP(+) contacts are provided by residues K147, 170–173 (PTNV), and H186. K194, W208, R215, and D277 together coordinate substrate.

It belongs to the NAD(P)-dependent epimerase/dehydratase family. Fucose synthase subfamily. As to quaternary structure, homodimer.

The catalysed reaction is GDP-beta-L-fucose + NADP(+) = GDP-4-dehydro-alpha-D-rhamnose + NADPH + H(+). It functions in the pathway nucleotide-sugar biosynthesis; GDP-L-fucose biosynthesis via de novo pathway; GDP-L-fucose from GDP-alpha-D-mannose: step 2/2. Catalyzes the two-step NADP-dependent conversion of GDP-4-dehydro-6-deoxy-D-mannose to GDP-fucose, involving an epimerase and a reductase reaction. In Pongo abelii (Sumatran orangutan), this protein is GDP-L-fucose synthase (GFUS).